The sequence spans 741 residues: Prestin (741 aa).

The Cytoplasmic segment spans residues Met-1–Tyr-79. Residues Val-80–Ala-105 traverse the membrane as a helical segment. At Ala-106 to Pro-109 the chain is on the extracellular side. Residues Val-110–Phe-125 traverse the membrane as a helical segment. Topologically, residues Phe-126–Phe-137 are cytoplasmic. The chain crosses the membrane as a helical span at residues Ala-138–Val-147. Residues Ala-148–Val-178 lie on the Extracellular side of the membrane. Positions Ile-158–Thr-168 match the Involved in motor function motif. N-linked (GlcNAc...) asparagine glycosylation is found at Asn-163 and Asn-166. 2 consecutive transmembrane segments (helical) span residues Ala-179 to Pro-208 and Leu-209 to Phe-230. The Extracellular portion of the chain corresponds to Gly-231–Val-243. The segment at residues Val-244 to Val-248 is an intramembrane region (helical). Residues Ala-249–Ser-261 lie on the Extracellular side of the membrane. A helical transmembrane segment spans residues Leu-262 to Lys-283. Topologically, residues Glu-284–Pro-291 are cytoplasmic. Residues Leu-292–Ile-303 form a helical membrane-spanning segment. Residues Ser-304–Leu-338 lie on the Extracellular side of the membrane. The chain crosses the membrane as a helical span at residues Val-339 to Leu-361. Residues Ala-362–Asp-370 lie on the Cytoplasmic side of the membrane. A helical membrane pass occupies residues Gly-371–Phe-388. Residues Gln-389–Ser-396 are Extracellular-facing. The helical transmembrane segment at Leu-397–Thr-406 threads the bilayer. Residue Ser-398 participates in salicylate binding. Over Gly-407–Thr-410 the chain is Cytoplasmic. A helical transmembrane segment spans residues Gln-411–Gly-429. The Extracellular segment spans residues Phe-430–Pro-436. The chain crosses the membrane as a helical span at residues Gln-437–Pro-459. Residues Phe-460 to Ile-467 lie on the Cytoplasmic side of the membrane. The chain crosses the membrane as a helical span at residues Glu-468–Gly-483. A topological domain (extracellular) is located at residue Leu-484. A helical transmembrane segment spans residues Asp-485–Thr-498. Topologically, residues Val-499–Ala-741 are cytoplasmic. An extended region for STAS domain region spans residues Ser-505–Ala-718. An STAS domain is found at Ala-525–Ser-713. Positions Ala-718–Ala-741 are disordered. The segment covering Glu-721–Gln-730 has biased composition (low complexity).

It belongs to the SLC26A/SulP transporter (TC 2.A.53) family. In terms of assembly, homodimer. Interacts (via STAS domain) with CALM; this interaction is calcium-dependent and the STAS domain interacts with only one lobe of CALM which is an elongated conformation.

The protein resides in the cell membrane. The enzyme catalyses 2 hydrogencarbonate(in) + chloride(out) = 2 hydrogencarbonate(out) + chloride(in). Functionally, voltage-sensitive motor protein that drives outer hair cell (OHC) electromotility (eM) and participates in sound amplification in the hearing organ. Converts changes in the transmembrane electric potential into mechanical displacements resulting in the coupling of its expansion to movement of a charged voltage sensor across the lipid membrane. The nature of the voltage sensor is not completely clear, and two models compete. In the first model, acts as an incomplete transporter where intracellular chloride anion acts as extrinsic voltage sensor that drives conformational change in the protein which is sufficient to produce a length change in the plane of the membrane and hence in the length of the OHC. The second model in which multiple charged amino acid residues are distributed at the intracellular and extracellular membrane interfaces that form an intrinsic voltage sensor, whose movement produces the non-linear capacitance (NLC). However, the effective voltage sensor may be the result of a hybrid voltage sensor assembled from intrinsic charge (charged residues) and extrinsic charge (bound anion). Notably, binding of anions to the anion-binding pocket partially neutralizes the intrinsic positive charge rather than to form an electrically negative sensor, therefore remaining charge may serve as voltage sensor that, after depolarization, moves from down (expanded state) to up (contracted) conformation, which is accompanied by an eccentric contraction of the intermembrane cross-sectional area of the protein as well as a major increase in the hydrophobic thickness of the protein having as consequences the plasma membrane thickening and the cell contraction after membrane depolarization. The anion-binding pocket transits from the inward-open (Down) state, where it is exposed toward the intracellular solvent in the absence of anion, to the occluded (Up) state upon anion binding. Salicylate competes for the anion-binding site and inhibits the voltage-sensor movement, and therefore inhibits the charge transfer and electromotility by displacing Cl(-) from the anion-binding site and by preventing the structural transitions to the contracted state. In addition, can act as a weak Cl(-)/HCO3 (-) antiporter across the cell membrane and so regulate the intracellular pH of the outer hair cells (OHCs), while firstly found as being unable to mediate electrogenic anion transport. Moreover, supports a role in cardiac mechanical amplification serving as an elastic element to enhance the actomyosin- based sarcomere contraction system. This is Prestin from Tursiops truncatus (Atlantic bottle-nosed dolphin).